Reading from the N-terminus, the 552-residue chain is MISKINGKLFADMIIQGAQNLSNNADLVDSLNVYPVPDGDTGTNMNLTITSGREEVENNLSQSIGELGKTFSKGLLMGARGNSGVILSQLFRGFCKNIETENEINAQQLASSFQAGVDTAYKAVMKPVEGTILTVAKDAAKAAVNKAEETDDCVEVMEYTIAEAEKSLNNTPNLLAVLKEVGVVDSGGKGLLCVYEGFLKGLTGQTIEAKKEKLNTEELVHEEHDFHGVINTEDIKYGYCTEMMVRFGKDKRAFDEQTFRTDMSQFGDSLLVINDDEIVKVHVHTETPGEVFNYGQEYGELIKLKVENMREQHREVIRKEKLNHHSDEQEESKTVETAIIAISMGDGISELFTSMGATHIISGGQTMNPSTEDIVKVIEQSQCKRAIILPNNKNIRMSSDQAATLVEADTVVIPTTSIPKGIAALFQYDPSSSLEDNHSHMTTALESVKSGSVTFAVRDTKIDGVEIKKGEFMGLSESKIVTSNDDEFVTVTGLLKSMLNEDSEILTIIAGEDANDDISDKLVEWVESEYPDVEVEEHNGGQPIYQYLFSVE.

The DhaL domain maps to 8–200 (KLFADMIIQG…LLCVYEGFLK (193 aa)).

This is an uncharacterized protein from Staphylococcus haemolyticus (strain JCSC1435).